The sequence spans 222 residues: Iron-sulfur cluster repair protein YtfE (222 aa).

It belongs to the RIC family. YtfE subfamily. Homodimer.

It is found in the cytoplasm. In terms of biological role, di-iron-containing protein involved in the repair of iron-sulfur clusters damaged by oxidative and nitrosative stress conditions. The sequence is that of Iron-sulfur cluster repair protein YtfE from Musicola paradisiaca (strain Ech703) (Dickeya paradisiaca).